The following is a 223-amino-acid chain: Twisted gastrulation protein homolog 1 (223 aa).

The signal sequence occupies residues 1–25; the sequence is MKLHYVAVLTLAILMFLTWLPESLS. Residues Asn-52 and Asn-81 are each glycosylated (N-linked (GlcNAc...) asparagine).

Belongs to the twisted gastrulation protein family. In terms of assembly, interacts with CHRD and BMP4. This interaction enhances CHRD/BMP4 complex formation. Interacts with BMP7.

The protein resides in the secreted. Its function is as follows. May be involved in dorsoventral axis formation. Seems to antagonize BMP signaling by forming ternary complexes with CHRD and BMPs, thereby preventing BMPs from binding to their receptors. In addition to the anti-BMP function, also has pro-BMP activity, partly mediated by cleavage and degradation of CHRD, which releases BMPs from ternary complexes. May be an important modulator of BMP-regulated cartilage development and chondrocyte differentiation. May play a role in thymocyte development. This is Twisted gastrulation protein homolog 1 (TWSG1) from Homo sapiens (Human).